We begin with the raw amino-acid sequence, 456 residues long: Bifunctional protein GlmU (456 aa).

Residues 1 to 228 (MPQNTLNIVI…SYLAAGVNNK (228 aa)) form a pyrophosphorylase region. UDP-N-acetyl-alpha-D-glucosamine-binding positions include 11–14 (LAAG), Lys-25, Gln-75, 80–81 (GT), 102–104 (YGD), Gly-138, Glu-153, Asn-168, and Asn-226. Residue Asp-104 participates in Mg(2+) binding. Asn-226 is a Mg(2+) binding site. Residues 229-249 (LQLAELERIFQTEQAQELLKA) form a linker region. The interval 250–456 (GVTLSDPARF…GWVRPEKDKQ (207 aa)) is N-acetyltransferase. The UDP-N-acetyl-alpha-D-glucosamine site is built by Arg-332 and Lys-350. Residue His-362 is the Proton acceptor of the active site. UDP-N-acetyl-alpha-D-glucosamine contacts are provided by Tyr-365 and Asn-376. Residues Ala-379, 385–386 (NY), Ser-404, Ala-422, and Arg-439 each bind acetyl-CoA.

The protein in the N-terminal section; belongs to the N-acetylglucosamine-1-phosphate uridyltransferase family. This sequence in the C-terminal section; belongs to the transferase hexapeptide repeat family. As to quaternary structure, homotrimer. The cofactor is Mg(2+).

Its subcellular location is the cytoplasm. It carries out the reaction alpha-D-glucosamine 1-phosphate + acetyl-CoA = N-acetyl-alpha-D-glucosamine 1-phosphate + CoA + H(+). The enzyme catalyses N-acetyl-alpha-D-glucosamine 1-phosphate + UTP + H(+) = UDP-N-acetyl-alpha-D-glucosamine + diphosphate. The protein operates within nucleotide-sugar biosynthesis; UDP-N-acetyl-alpha-D-glucosamine biosynthesis; N-acetyl-alpha-D-glucosamine 1-phosphate from alpha-D-glucosamine 6-phosphate (route II): step 2/2. It participates in nucleotide-sugar biosynthesis; UDP-N-acetyl-alpha-D-glucosamine biosynthesis; UDP-N-acetyl-alpha-D-glucosamine from N-acetyl-alpha-D-glucosamine 1-phosphate: step 1/1. It functions in the pathway bacterial outer membrane biogenesis; LPS lipid A biosynthesis. Its function is as follows. Catalyzes the last two sequential reactions in the de novo biosynthetic pathway for UDP-N-acetylglucosamine (UDP-GlcNAc). The C-terminal domain catalyzes the transfer of acetyl group from acetyl coenzyme A to glucosamine-1-phosphate (GlcN-1-P) to produce N-acetylglucosamine-1-phosphate (GlcNAc-1-P), which is converted into UDP-GlcNAc by the transfer of uridine 5-monophosphate (from uridine 5-triphosphate), a reaction catalyzed by the N-terminal domain. The protein is Bifunctional protein GlmU of Neisseria meningitidis serogroup C / serotype 2a (strain ATCC 700532 / DSM 15464 / FAM18).